Reading from the N-terminus, the 412-residue chain is 1-deoxy-D-xylulose 5-phosphate reductoisomerase (412 aa).

8 residues coordinate NADPH: Thr10, Gly11, Ser12, Ile13, Gly36, Lys37, Asn38, and Asn130. Lys131 provides a ligand contact to 1-deoxy-D-xylulose 5-phosphate. Residue Glu132 coordinates NADPH. Residue Asp156 coordinates Mn(2+). 1-deoxy-D-xylulose 5-phosphate contacts are provided by Ser157, Glu158, Ser194, and His217. A Mn(2+)-binding site is contributed by Glu158. Gly223 serves as a coordination point for NADPH. Positions 230, 235, 236, and 239 each coordinate 1-deoxy-D-xylulose 5-phosphate. Position 239 (Glu239) interacts with Mn(2+).

Belongs to the DXR family. The cofactor is Mg(2+). It depends on Mn(2+) as a cofactor.

The catalysed reaction is 2-C-methyl-D-erythritol 4-phosphate + NADP(+) = 1-deoxy-D-xylulose 5-phosphate + NADPH + H(+). Its pathway is isoprenoid biosynthesis; isopentenyl diphosphate biosynthesis via DXP pathway; isopentenyl diphosphate from 1-deoxy-D-xylulose 5-phosphate: step 1/6. Catalyzes the NADPH-dependent rearrangement and reduction of 1-deoxy-D-xylulose-5-phosphate (DXP) to 2-C-methyl-D-erythritol 4-phosphate (MEP). The protein is 1-deoxy-D-xylulose 5-phosphate reductoisomerase of Prochlorococcus marinus (strain NATL1A).